Consider the following 307-residue polypeptide: Small ribosomal subunit protein uS2 (307 aa).

The tract at residues 256–307 (GGEAEQAAVDATGGAATEETPAAESTGAASEAAAVSEAAEPATEQPAADAEA) is disordered. The span at 259–307 (AEQAAVDATGGAATEETPAAESTGAASEAAAVSEAAEPATEQPAADAEA) shows a compositional bias: low complexity.

It belongs to the universal ribosomal protein uS2 family.

In Nocardioides sp. (strain ATCC BAA-499 / JS614), this protein is Small ribosomal subunit protein uS2.